The primary structure comprises 189 residues: Pyridoxal 5'-phosphate synthase subunit PdxT (189 aa).

47–49 contributes to the L-glutamine binding site; the sequence is GES. C79 (nucleophile) is an active-site residue. L-glutamine is bound by residues R106 and 135–136; that span reads IR. Residues H171 and E173 each act as charge relay system in the active site.

The protein belongs to the glutaminase PdxT/SNO family. In terms of assembly, in the presence of PdxS, forms a dodecamer of heterodimers. Only shows activity in the heterodimer.

It carries out the reaction aldehydo-D-ribose 5-phosphate + D-glyceraldehyde 3-phosphate + L-glutamine = pyridoxal 5'-phosphate + L-glutamate + phosphate + 3 H2O + H(+). The catalysed reaction is L-glutamine + H2O = L-glutamate + NH4(+). It participates in cofactor biosynthesis; pyridoxal 5'-phosphate biosynthesis. Functionally, catalyzes the hydrolysis of glutamine to glutamate and ammonia as part of the biosynthesis of pyridoxal 5'-phosphate. The resulting ammonia molecule is channeled to the active site of PdxS. The protein is Pyridoxal 5'-phosphate synthase subunit PdxT of Thermoanaerobacter pseudethanolicus (strain ATCC 33223 / 39E) (Clostridium thermohydrosulfuricum).